The primary structure comprises 84 residues: Large ribosomal subunit protein bL27 (84 aa).

The segment at 1–21 (MAHKKAGGSTRNGRDSESKRL) is disordered.

Belongs to the bacterial ribosomal protein bL27 family.

The sequence is that of Large ribosomal subunit protein bL27 from Baumannia cicadellinicola subsp. Homalodisca coagulata.